The chain runs to 187 residues: Ribosome-recycling factor (187 aa).

This sequence belongs to the RRF family.

It localises to the cytoplasm. Functionally, responsible for the release of ribosomes from messenger RNA at the termination of protein biosynthesis. May increase the efficiency of translation by recycling ribosomes from one round of translation to another. This is Ribosome-recycling factor from Rhodopseudomonas palustris (strain BisB5).